An 814-amino-acid chain; its full sequence is Testis-specific zinc finger protein topi (814 aa).

C2H2-type zinc fingers lie at residues 228–250 (NECT…MEKH), 275–297 (VKCN…GLIH), 360–382 (LQCE…SASH), 429–453 (FVCN…TSFH), 467–490 (LPCD…EEKH), 511–533 (YLCD…LRFH), 539–564 (FVCQ…RKCH), 570–592 (YLCL…RLIH), 598–620 (YECE…QRIH), and 626–649 (YSCL…RARH). Residues 669 to 705 (TAAAQKAQSHNPEQQDNDVAGGASTSDVPSGSGFMST) form a disordered region. A compositionally biased stretch (polar residues) spans 691–705 (ASTSDVPSGSGFMST).

In terms of assembly, interacts with comr. As to expression, expressed in testis; primary spermatocytes.

The protein resides in the nucleus. In terms of biological role, required for male meiotic division and spermatid differentiation. Required for accumulation of aly and comr on chromatin. May function as a transcription factor. This chain is Testis-specific zinc finger protein topi (topi), found in Drosophila melanogaster (Fruit fly).